The following is a 348-amino-acid chain: Tetraacyldisaccharide 4'-kinase (348 aa).

54–61 (TVGGAGKT) contributes to the ATP binding site.

This sequence belongs to the LpxK family.

The enzyme catalyses a lipid A disaccharide + ATP = a lipid IVA + ADP + H(+). It functions in the pathway glycolipid biosynthesis; lipid IV(A) biosynthesis; lipid IV(A) from (3R)-3-hydroxytetradecanoyl-[acyl-carrier-protein] and UDP-N-acetyl-alpha-D-glucosamine: step 6/6. Its function is as follows. Transfers the gamma-phosphate of ATP to the 4'-position of a tetraacyldisaccharide 1-phosphate intermediate (termed DS-1-P) to form tetraacyldisaccharide 1,4'-bis-phosphate (lipid IVA). In Agrobacterium fabrum (strain C58 / ATCC 33970) (Agrobacterium tumefaciens (strain C58)), this protein is Tetraacyldisaccharide 4'-kinase.